A 205-amino-acid polypeptide reads, in one-letter code: Protein N-terminal glutamine amidohydrolase (205 aa).

Residues Cys20, His74, and Asp90 contribute to the active site.

This sequence belongs to the NTAQ1 family. As to quaternary structure, monomer.

The catalysed reaction is N-terminal L-glutaminyl-[protein] + H2O = N-terminal L-glutamyl-[protein] + NH4(+). Its function is as follows. Mediates the side-chain deamidation of N-terminal glutamine residues to glutamate, an important step in N-end rule pathway of protein degradation. Conversion of the resulting N-terminal glutamine to glutamate renders the protein susceptible to arginylation, polyubiquitination and degradation as specified by the N-end rule. Does not act on substrates with internal or C-terminal glutamine and does not act on non-glutamine residues in any position. In Drosophila pseudoobscura pseudoobscura (Fruit fly), this protein is Protein N-terminal glutamine amidohydrolase (tun).